Reading from the N-terminus, the 298-residue chain is MTDSHYIGRFAPSPSGELHFGSLIAALGSYLQARAQRGIWRVRIEDIDPPREVPGAAATILRQLEHYGLHWDGEVLWQSQRHEAYREALAWLHEQGLSYYCTCPRSRIQRLGGIYDGHCRTLCHGPENAAVRIKQQHPVMHFHDALRGDIQADPQLASEDFIIHRRDGLFAYNLAVVVDDHFQGVTEIVRGADLIEPTVRQLSLYKQFGWRAPGYVHLPLALNEQGAKLSKQNHAPALATGDPRPVLVQALRFLGQRDVVAWQEMSVEELLRFAVAHWRLTAVPTSANVNPAFSNASR.

L-glutamate contacts are provided by residues 9-13 (RFAPS) and E45. The 'HIGH' region signature appears at 12-22 (PSPSGELHFGS). Zn(2+) is bound by residues C101, C103, Y115, and C119. Positions 172 and 190 each coordinate L-glutamate. The short motif at 228 to 232 (KLSKQ) is the 'KMSKS' region element. K231 provides a ligand contact to ATP.

The protein belongs to the class-I aminoacyl-tRNA synthetase family. GluQ subfamily. The cofactor is Zn(2+).

Functionally, catalyzes the tRNA-independent activation of glutamate in presence of ATP and the subsequent transfer of glutamate onto a tRNA(Asp). Glutamate is transferred on the 2-amino-5-(4,5-dihydroxy-2-cyclopenten-1-yl) moiety of the queuosine in the wobble position of the QUC anticodon. This is Glutamyl-Q tRNA(Asp) synthetase from Salmonella typhimurium (strain LT2 / SGSC1412 / ATCC 700720).